Reading from the N-terminus, the 277-residue chain is Large ribosomal subunit protein uL2c (277 aa).

The interval 225–277 is disordered; it reads MNPCDHPHGGGEGRSPIGRPKPVTPWGKPALGKKTRSPKRFSNKYIIRSRKMV. Residues 255–277 show a composition bias toward basic residues; that stretch reads LGKKTRSPKRFSNKYIIRSRKMV.

It belongs to the universal ribosomal protein uL2 family. As to quaternary structure, part of the 50S ribosomal subunit.

It localises to the plastid. It is found in the chloroplast. The polypeptide is Large ribosomal subunit protein uL2c (rpl2) (Euglena gracilis).